A 327-amino-acid polypeptide reads, in one-letter code: Undecaprenyl-phosphate 4-deoxy-4-formamido-L-arabinose transferase (327 aa).

2 helical membrane-spanning segments follow: residues 235 to 255 and 270 to 290; these read LLSLVGSAIALLGFTFSVLLV and VFTLFAVLFMFIGAQFVGMGL.

Belongs to the glycosyltransferase 2 family.

It localises to the cell inner membrane. It carries out the reaction UDP-4-deoxy-4-formamido-beta-L-arabinose + di-trans,octa-cis-undecaprenyl phosphate = 4-deoxy-4-formamido-alpha-L-arabinopyranosyl di-trans,octa-cis-undecaprenyl phosphate + UDP. It functions in the pathway glycolipid biosynthesis; 4-amino-4-deoxy-alpha-L-arabinose undecaprenyl phosphate biosynthesis; 4-amino-4-deoxy-alpha-L-arabinose undecaprenyl phosphate from UDP-4-deoxy-4-formamido-beta-L-arabinose and undecaprenyl phosphate: step 1/2. The protein operates within bacterial outer membrane biogenesis; lipopolysaccharide biosynthesis. Functionally, catalyzes the transfer of 4-deoxy-4-formamido-L-arabinose from UDP to undecaprenyl phosphate. The modified arabinose is attached to lipid A and is required for resistance to polymyxin and cationic antimicrobial peptides. In Yersinia pseudotuberculosis serotype IB (strain PB1/+), this protein is Undecaprenyl-phosphate 4-deoxy-4-formamido-L-arabinose transferase.